The chain runs to 791 residues: Nuclear cap-binding protein subunit 1-A (791 aa).

Residues 1–24 are disordered; it reads MSRRRHSDENDGGQAHKRRKTSEP. The MIF4G domain occupies 28–240; it reads EDRLESLICR…CLWAQIQKLK (213 aa). A coiled-coil region spans residues 641–714; the sequence is LHSTIRKMNK…SEQKNLFLVI (74 aa). The segment at 664-687 is disordered; sequence QRLAKQHKHRDSDDNDEDSGRKDG.

Belongs to the NCBP1 family. Component of the nuclear cap-binding complex (CBC), a heterodimer composed of ncbp1/cbp80 and ncbp2/cbp20 that interacts with m7GpppG-capped RNA. Component of an alternative nuclear cap-binding complex (CBC) composed of ncbp1/cbp80 and ncbp3.

The protein resides in the nucleus. It is found in the cytoplasm. Component of the cap-binding complex (CBC), which binds cotranscriptionally to the 5'-cap of pre-mRNAs and is involved in various processes such as pre-mRNA splicing, translation regulation, nonsense-mediated mRNA decay, RNA-mediated gene silencing (RNAi) by microRNAs (miRNAs) and mRNA export. The CBC complex is involved in mRNA export from the nucleus, leading to the recruitment of the mRNA export machinery to the 5'-end of mRNA and to mRNA export in a 5' to 3' direction through the nuclear pore. The CBC complex is also involved in mediating U snRNA and intronless mRNAs export from the nucleus. The CBC complex is essential for a pioneer round of mRNA translation, before steady state translation when the CBC complex is replaced by cytoplasmic cap-binding protein eIF4E. The pioneer round of mRNA translation mediated by the CBC complex plays a central role in nonsense-mediated mRNA decay (NMD), NMD only taking place in mRNAs bound to the CBC complex, but not on eIF4E-bound mRNAs. The CBC complex enhances NMD in mRNAs containing at least one exon-junction complex (EJC), promoting the interaction between UPF1 and UPF2. The CBC complex is also involved in 'failsafe' NMD, which is independent of the EJC complex, while it does not participate in Staufen-mediated mRNA decay (SMD). During cell proliferation, the CBC complex is also involved in microRNAs (miRNAs) biogenesis via its interaction with SRRT/ARS2 and is required for miRNA-mediated RNA interference. The CBC complex also acts as a negative regulator of parn, thereby acting as an inhibitor of mRNA deadenylation. In the CBC complex, NCBP1/CBP80 does not bind directly capped RNAs (m7GpppG-capped RNA) but is required to stabilize the movement of the N-terminal loop of NCBP2/CBP20 and lock the CBC into a high affinity cap-binding state with the cap structure. Associates with NCBP3 to form an alternative cap-binding complex (CBC) which plays a key role in mRNA export. The conventional CBC with NCBP2 binds both small nuclear RNA (snRNA) and messenger (mRNA) and is involved in their export from the nucleus whereas the alternative CBC with NCBP3 does not bind snRNA and associates only with mRNA thereby playing a role only in mRNA export. The polypeptide is Nuclear cap-binding protein subunit 1-A (ncbp1-a) (Xenopus laevis (African clawed frog)).